The following is a 385-amino-acid chain: 5'-AMP-activated protein kinase catalytic subunit alpha-1 (385 aa).

The Protein kinase domain occupies 1-229 (DGRVKIGHYI…IKDIREHEWF (229 aa)). A Phosphothreonine modification is found at T14. 15-22 (LGVGTFGK) is a binding site for ATP. D100 (proton acceptor) is an active-site residue. T133 carries the post-translational modification Phosphothreonine; by LKB1 and CaMKK2. Phosphothreonine is present on residues T219 and T276. Residues 252–297 (EALKQDPLAVAYHLIIDNRDFYLATSPPDSFLDDHHLTRVPFLVAE) are AIS. At S277 the chain carries Phosphoserine. Position 281 is a phosphoserine; by ULK1 (S281). At T289 the chain carries Phosphothreonine; by ULK1. T298 carries the post-translational modification Phosphothreonine. S353 and S383 each carry phosphoserine.

The protein belongs to the protein kinase superfamily. CAMK Ser/Thr protein kinase family. SNF1 subfamily. AMPK is a heterotrimer of an alpha catalytic subunit (PRKAA1 or PRKAA2), a beta (PRKAB1 or PRKAB2) and a gamma non-catalytic subunits (PRKAG1, PRKAG2 or PRKAG3). Interacts with FNIP1 and FNIP2. It depends on Mg(2+) as a cofactor. Ubiquitinated. In terms of processing, phosphorylated at Thr-133 by STK11/LKB1 in complex with STE20-related adapter-alpha (STRADA) pseudo kinase and CAB39. Also phosphorylated at Thr-133 by CAMKK2; triggered by a rise in intracellular calcium ions, without detectable changes in the AMP/ATP ratio. CAMKK1 can also phosphorylate Thr-133, but at a much lower level. Dephosphorylated by protein phosphatase 2A and 2C (PP2A and PP2C). Phosphorylated by ULK1 and ULK2; leading to negatively regulate AMPK activity and suggesting the existence of a regulatory feedback loop between ULK1, ULK2 and AMPK. Dephosphorylated by PPM1A and PPM1B. Post-translationally, glycosylated; O-GlcNAcylated by OGT, promoting the AMP-activated protein kinase (AMPK) activity.

The protein localises to the cytoplasm. Its subcellular location is the nucleus. The enzyme catalyses L-seryl-[protein] + ATP = O-phospho-L-seryl-[protein] + ADP + H(+). It carries out the reaction L-threonyl-[protein] + ATP = O-phospho-L-threonyl-[protein] + ADP + H(+). It catalyses the reaction L-seryl-[acetyl-CoA carboxylase] + ATP = O-phospho-L-seryl-[acetyl-CoA carboxylase] + ADP + H(+). The catalysed reaction is L-seryl-[3-hydroxy-3-methylglutaryl-coenzyme A reductase] + ATP = O-phospho-L-seryl-[3-hydroxy-3-methylglutaryl-coenzyme A reductase] + ADP + H(+). The enzyme catalyses L-seryl-[tau protein] + ATP = O-phospho-L-seryl-[tau protein] + ADP + H(+). It carries out the reaction L-threonyl-[tau protein] + ATP = O-phospho-L-threonyl-[tau protein] + ADP + H(+). Activated by phosphorylation on Thr-133. Binding of AMP to non-catalytic gamma subunit (PRKAG1, PRKAG2 or PRKAG3) results in allosteric activation, inducing phosphorylation on Thr-133. AMP-binding to gamma subunit also sustains activity by preventing dephosphorylation of Thr-133. ADP also stimulates Thr-133 phosphorylation, without stimulating already phosphorylated AMPK. ATP promotes dephosphorylation of Thr-133, rendering the enzyme inactive. Under physiological conditions AMPK mainly exists in its inactive form in complex with ATP, which is much more abundant than AMP. Selectively inhibited by compound C (6-[4-(2-Piperidin-1-yl-ethoxy)-phenyl)]-3-pyridin-4-yl-pyyrazolo[1,5-a] pyrimidine. Activated by resveratrol, a natural polyphenol present in red wine, and S17834, a synthetic polyphenol. Functionally, catalytic subunit of AMP-activated protein kinase (AMPK), an energy sensor protein kinase that plays a key role in regulating cellular energy metabolism. In response to reduction of intracellular ATP levels, AMPK activates energy-producing pathways and inhibits energy-consuming processes: inhibits protein, carbohydrate and lipid biosynthesis, as well as cell growth and proliferation. AMPK acts via direct phosphorylation of metabolic enzymes, and by longer-term effects via phosphorylation of transcription regulators. Regulates lipid synthesis by phosphorylating and inactivating lipid metabolic enzymes such as ACACA, ACACB, GYS1, HMGCR and LIPE; regulates fatty acid and cholesterol synthesis by phosphorylating acetyl-CoA carboxylase (ACACA and ACACB) and hormone-sensitive lipase (LIPE) enzymes, respectively. Promotes lipolysis of lipid droplets by mediating phosphorylation of isoform 1 of CHKA (CHKalpha2). Regulates insulin-signaling and glycolysis by phosphorylating IRS1, PFKFB2 and PFKFB3. AMPK stimulates glucose uptake in muscle by increasing the translocation of the glucose transporter SLC2A4/GLUT4 to the plasma membrane, possibly by mediating phosphorylation of TBC1D4/AS160. Regulates transcription and chromatin structure by phosphorylating transcription regulators involved in energy metabolism such as CRTC2/TORC2, FOXO3, histone H2B, HDAC5, MEF2C, MLXIPL/ChREBP, EP300, HNF4A, p53/TP53, SREBF1, SREBF2 and PPARGC1A. Acts as a key regulator of glucose homeostasis in liver by phosphorylating CRTC2/TORC2, leading to CRTC2/TORC2 sequestration in the cytoplasm. In response to stress, phosphorylates 'Ser-36' of histone H2B (H2BS36ph), leading to promote transcription. Acts as a key regulator of cell growth and proliferation by phosphorylating FNIP1, TSC2, RPTOR, WDR24 and ATG1/ULK1: in response to nutrient limitation, negatively regulates the mTORC1 complex by phosphorylating RPTOR component of the mTORC1 complex and by phosphorylating and activating TSC2. Also phosphorylates and inhibits GATOR2 subunit WDR24 in response to nutrient limitation, leading to suppress glucose-mediated mTORC1 activation. In response to energetic stress, phosphorylates FNIP1, inactivating the non-canonical mTORC1 signaling, thereby promoting nuclear translocation of TFEB and TFE3, and inducing transcription of lysosomal or autophagy genes. In response to nutrient limitation, promotes autophagy by phosphorylating and activating ATG1/ULK1. In that process also activates WDR45/WIPI4. Phosphorylates CASP6, thereby preventing its autoprocessing and subsequent activation. In response to nutrient limitation, phosphorylates transcription factor FOXO3 promoting FOXO3 mitochondrial import. Also acts as a regulator of cellular polarity by remodeling the actin cytoskeleton; probably by indirectly activating myosin. AMPK also acts as a regulator of circadian rhythm by mediating phosphorylation of CRY1, leading to destabilize it. May regulate the Wnt signaling pathway by phosphorylating CTNNB1, leading to stabilize it. Also has tau-protein kinase activity: in response to amyloid beta A4 protein (APP) exposure, activated by CAMKK2, leading to phosphorylation of MAPT/TAU; however the relevance of such data remains unclear in vivo. Also phosphorylates CFTR, EEF2K, KLC1, NOS3 and SLC12A1. Regulates hepatic lipogenesis. Activated via SIRT3, represses sterol regulatory element-binding protein (SREBP) transcriptional activities and ATP-consuming lipogenesis to restore cellular energy balance. Upon stress, regulates mitochondrial fragmentation through phosphorylation of MTFR1L. This is 5'-AMP-activated protein kinase catalytic subunit alpha-1 (PRKAA1) from Sus scrofa (Pig).